Consider the following 368-residue polypeptide: Nucleotide pyrophosphatase/phosphodiesterase (368 aa).

Belongs to the metallophosphoesterase superfamily. In terms of assembly, monomer and homomer. In terms of processing, glycosylated.

It localises to the plastid. It is found in the chloroplast. Its function is as follows. Hydrolyzes pyrophosphate, phosphodiester and phosphosulfate linkages of nucleotide-sugars, sulfonucleotides and nucleoside di and triphosphates. Highest activity observed with the substrates ADP-glucose and adenosine 5'-phosphosulfate. This Hordeum vulgare (Barley) protein is Nucleotide pyrophosphatase/phosphodiesterase.